Here is a 443-residue protein sequence, read N- to C-terminus: Tubulin beta-1/beta-2 chain (443 aa).

The GTP site is built by Gln11, Glu69, Ser138, Gly142, Thr143, Gly144, Asn204, and Asn226. Position 69 (Glu69) interacts with Mg(2+). The interval Gln424–Ala443 is disordered. Positions Ser429–Ala443 are enriched in acidic residues.

The protein belongs to the tubulin family. As to quaternary structure, dimer of alpha and beta chains. A typical microtubule is a hollow water-filled tube with an outer diameter of 25 nm and an inner diameter of 15 nM. Alpha-beta heterodimers associate head-to-tail to form protofilaments running lengthwise along the microtubule wall with the beta-tubulin subunit facing the microtubule plus end conferring a structural polarity. Microtubules usually have 13 protofilaments but different protofilament numbers can be found in some organisms and specialized cells. Mg(2+) serves as cofactor.

Its subcellular location is the cytoplasm. It localises to the cytoskeleton. In terms of biological role, tubulin is the major constituent of microtubules, a cylinder consisting of laterally associated linear protofilaments composed of alpha- and beta-tubulin heterodimers. Microtubules grow by the addition of GTP-tubulin dimers to the microtubule end, where a stabilizing cap forms. Below the cap, tubulin dimers are in GDP-bound state, owing to GTPase activity of alpha-tubulin. The sequence is that of Tubulin beta-1/beta-2 chain (TUBB1) from Chlamydomonas reinhardtii (Chlamydomonas smithii).